The following is a 465-amino-acid chain: tRNA (guanine(37)-N(1))-methyltransferase (465 aa).

Residues 1-20 (MDKNSQLRDMNLFRAPAARA) constitute a mitochondrion transit peptide. Residues histidine 238 and 304-305 (DG) each bind S-adenosyl-L-methionine. Residues 326–345 (AVIKPPRPPRKSAAPPPEPV) form a disordered region. Asparagine 359 contacts S-adenosyl-L-methionine.

It belongs to the class I-like SAM-binding methyltransferase superfamily. TRM5/TYW2 family. Monomer.

Its subcellular location is the mitochondrion matrix. The protein resides in the nucleus. It is found in the cytoplasm. The catalysed reaction is guanosine(37) in tRNA + S-adenosyl-L-methionine = N(1)-methylguanosine(37) in tRNA + S-adenosyl-L-homocysteine + H(+). Its function is as follows. Specifically methylates the N1 position of guanosine-37 in various cytoplasmic and mitochondrial tRNAs. Methylation is not dependent on the nature of the nucleoside 5' of the target nucleoside. This is the first step in the biosynthesis of wybutosine (yW), a modified base adjacent to the anticodon of tRNAs and required for accurate decoding. The polypeptide is tRNA (guanine(37)-N(1))-methyltransferase (Fusarium vanettenii (strain ATCC MYA-4622 / CBS 123669 / FGSC 9596 / NRRL 45880 / 77-13-4) (Fusarium solani subsp. pisi)).